The primary structure comprises 339 residues: DNA-directed RNA polymerase subunit alpha (339 aa).

Residues 1–235 (MTIQKNWQEL…DQLNVFVNFE (235 aa)) form an alpha N-terminal domain (alpha-NTD) region. The alpha C-terminal domain (alpha-CTD) stretch occupies residues 251–339 (FNPAFLKKVD…ELAKRFEDHY (89 aa)).

It belongs to the RNA polymerase alpha chain family. In terms of assembly, homodimer. The RNAP catalytic core consists of 2 alpha, 1 beta, 1 beta' and 1 omega subunit. When a sigma factor is associated with the core the holoenzyme is formed, which can initiate transcription.

The enzyme catalyses RNA(n) + a ribonucleoside 5'-triphosphate = RNA(n+1) + diphosphate. DNA-dependent RNA polymerase catalyzes the transcription of DNA into RNA using the four ribonucleoside triphosphates as substrates. This chain is DNA-directed RNA polymerase subunit alpha, found in Nitrobacter winogradskyi (strain ATCC 25391 / DSM 10237 / CIP 104748 / NCIMB 11846 / Nb-255).